The primary structure comprises 468 residues: N-acetyltransferase SLI1 (468 aa).

The protein localises to the endoplasmic reticulum. In terms of biological role, confers resistance to the sphingolipid biosynthesis inhibitor drug myriocin (ISP-1). Inactivates ISP-1 by converting it into N-acetyl-myriocin. Cooperates with YPK1 in mediating resistance to myriocin. This chain is N-acetyltransferase SLI1 (SLI1), found in Saccharomyces cerevisiae (strain ATCC 204508 / S288c) (Baker's yeast).